The primary structure comprises 188 residues: Elongation factor P (188 aa).

This sequence belongs to the elongation factor P family.

Its subcellular location is the cytoplasm. The protein operates within protein biosynthesis; polypeptide chain elongation. Involved in peptide bond synthesis. Stimulates efficient translation and peptide-bond synthesis on native or reconstituted 70S ribosomes in vitro. Probably functions indirectly by altering the affinity of the ribosome for aminoacyl-tRNA, thus increasing their reactivity as acceptors for peptidyl transferase. This Leptospira biflexa serovar Patoc (strain Patoc 1 / Ames) protein is Elongation factor P.